The sequence spans 336 residues: Holliday junction branch migration complex subunit RuvB (336 aa).

Residues 1–182 are large ATPase domain (RuvB-L); it reads MKERIVNLET…FGMSFRMQFY (182 aa). Residues leucine 21, arginine 22, glycine 63, lysine 66, threonine 67, serine 68, 129–131, arginine 172, tyrosine 182, and arginine 219 contribute to the ATP site; that span reads EDF. Threonine 67 provides a ligand contact to Mg(2+). Positions 183–253 are small ATPAse domain (RuvB-S); sequence SPSELALIIK…ITLHALNELG (71 aa). A head domain (RuvB-H) region spans residues 256 to 336; the sequence is ELGFDEADLA…IPTLKSQTLF (81 aa). The DNA site is built by arginine 310 and arginine 315.

The protein belongs to the RuvB family. Homohexamer. Forms an RuvA(8)-RuvB(12)-Holliday junction (HJ) complex. HJ DNA is sandwiched between 2 RuvA tetramers; dsDNA enters through RuvA and exits via RuvB. An RuvB hexamer assembles on each DNA strand where it exits the tetramer. Each RuvB hexamer is contacted by two RuvA subunits (via domain III) on 2 adjacent RuvB subunits; this complex drives branch migration. In the full resolvosome a probable DNA-RuvA(4)-RuvB(12)-RuvC(2) complex forms which resolves the HJ.

The protein localises to the cytoplasm. It catalyses the reaction ATP + H2O = ADP + phosphate + H(+). The RuvA-RuvB-RuvC complex processes Holliday junction (HJ) DNA during genetic recombination and DNA repair, while the RuvA-RuvB complex plays an important role in the rescue of blocked DNA replication forks via replication fork reversal (RFR). RuvA specifically binds to HJ cruciform DNA, conferring on it an open structure. The RuvB hexamer acts as an ATP-dependent pump, pulling dsDNA into and through the RuvAB complex. RuvB forms 2 homohexamers on either side of HJ DNA bound by 1 or 2 RuvA tetramers; 4 subunits per hexamer contact DNA at a time. Coordinated motions by a converter formed by DNA-disengaged RuvB subunits stimulates ATP hydrolysis and nucleotide exchange. Immobilization of the converter enables RuvB to convert the ATP-contained energy into a lever motion, pulling 2 nucleotides of DNA out of the RuvA tetramer per ATP hydrolyzed, thus driving DNA branch migration. The RuvB motors rotate together with the DNA substrate, which together with the progressing nucleotide cycle form the mechanistic basis for DNA recombination by continuous HJ branch migration. Branch migration allows RuvC to scan DNA until it finds its consensus sequence, where it cleaves and resolves cruciform DNA. In Helicobacter pylori (strain G27), this protein is Holliday junction branch migration complex subunit RuvB.